Consider the following 209-residue polypeptide: Guanylate kinase (209 aa).

A Guanylate kinase-like domain is found at 10-189 (GLLLVLSAPS…AFSDLRSVVV (180 aa)). ATP is bound at residue 17 to 24 (APSGAGKT).

This sequence belongs to the guanylate kinase family.

The protein localises to the cytoplasm. It catalyses the reaction GMP + ATP = GDP + ADP. In terms of biological role, essential for recycling GMP and indirectly, cGMP. This chain is Guanylate kinase, found in Myxococcus xanthus (strain DK1622).